A 211-amino-acid polypeptide reads, in one-letter code: Thiamine-phosphate synthase (211 aa).

4-amino-2-methyl-5-(diphosphooxymethyl)pyrimidine-binding positions include 37 to 41 and Asn69; that span reads QLRIK. Mg(2+) is bound by residues Asp70 and Asp89. Ser108 provides a ligand contact to 4-amino-2-methyl-5-(diphosphooxymethyl)pyrimidine. 134–136 serves as a coordination point for 2-[(2R,5Z)-2-carboxy-4-methylthiazol-5(2H)-ylidene]ethyl phosphate; it reads TQT. Residue Lys137 coordinates 4-amino-2-methyl-5-(diphosphooxymethyl)pyrimidine. Residues Gly166 and 186 to 187 contribute to the 2-[(2R,5Z)-2-carboxy-4-methylthiazol-5(2H)-ylidene]ethyl phosphate site; that span reads VS.

The protein belongs to the thiamine-phosphate synthase family. It depends on Mg(2+) as a cofactor.

It catalyses the reaction 2-[(2R,5Z)-2-carboxy-4-methylthiazol-5(2H)-ylidene]ethyl phosphate + 4-amino-2-methyl-5-(diphosphooxymethyl)pyrimidine + 2 H(+) = thiamine phosphate + CO2 + diphosphate. The enzyme catalyses 2-(2-carboxy-4-methylthiazol-5-yl)ethyl phosphate + 4-amino-2-methyl-5-(diphosphooxymethyl)pyrimidine + 2 H(+) = thiamine phosphate + CO2 + diphosphate. It carries out the reaction 4-methyl-5-(2-phosphooxyethyl)-thiazole + 4-amino-2-methyl-5-(diphosphooxymethyl)pyrimidine + H(+) = thiamine phosphate + diphosphate. The protein operates within cofactor biosynthesis; thiamine diphosphate biosynthesis; thiamine phosphate from 4-amino-2-methyl-5-diphosphomethylpyrimidine and 4-methyl-5-(2-phosphoethyl)-thiazole: step 1/1. Condenses 4-methyl-5-(beta-hydroxyethyl)thiazole monophosphate (THZ-P) and 2-methyl-4-amino-5-hydroxymethyl pyrimidine pyrophosphate (HMP-PP) to form thiamine monophosphate (TMP). This chain is Thiamine-phosphate synthase, found in Shigella dysenteriae serotype 1 (strain Sd197).